Consider the following 376-residue polypeptide: 3-dehydroquinate synthase (376 aa).

NAD(+) is bound by residues 115–119 (GVIGD), 139–140 (TS), K152, and K161. Residues E194, H256, and H275 each contribute to the Zn(2+) site.

It belongs to the sugar phosphate cyclases superfamily. Dehydroquinate synthase family. Co(2+) is required as a cofactor. Zn(2+) serves as cofactor. The cofactor is NAD(+).

The protein resides in the cytoplasm. It carries out the reaction 7-phospho-2-dehydro-3-deoxy-D-arabino-heptonate = 3-dehydroquinate + phosphate. It functions in the pathway metabolic intermediate biosynthesis; chorismate biosynthesis; chorismate from D-erythrose 4-phosphate and phosphoenolpyruvate: step 2/7. Its function is as follows. Catalyzes the conversion of 3-deoxy-D-arabino-heptulosonate 7-phosphate (DAHP) to dehydroquinate (DHQ). The protein is 3-dehydroquinate synthase of Rhizobium johnstonii (strain DSM 114642 / LMG 32736 / 3841) (Rhizobium leguminosarum bv. viciae).